Consider the following 643-residue polypeptide: Phosphomethylpyrimidine synthase (643 aa).

Substrate is bound by residues asparagine 248, methionine 277, tyrosine 306, histidine 342, 362-364 (SRG), 403-406 (DGLR), and glutamate 442. Histidine 446 lines the Zn(2+) pocket. Tyrosine 469 is a binding site for substrate. Histidine 510 contributes to the Zn(2+) binding site. The [4Fe-4S] cluster site is built by cysteine 590, cysteine 593, and cysteine 598.

Belongs to the ThiC family. As to quaternary structure, homodimer. The cofactor is [4Fe-4S] cluster.

The enzyme catalyses 5-amino-1-(5-phospho-beta-D-ribosyl)imidazole + S-adenosyl-L-methionine = 4-amino-2-methyl-5-(phosphooxymethyl)pyrimidine + CO + 5'-deoxyadenosine + formate + L-methionine + 3 H(+). It functions in the pathway cofactor biosynthesis; thiamine diphosphate biosynthesis. Functionally, catalyzes the synthesis of the hydroxymethylpyrimidine phosphate (HMP-P) moiety of thiamine from aminoimidazole ribotide (AIR) in a radical S-adenosyl-L-methionine (SAM)-dependent reaction. This Paraburkholderia phytofirmans (strain DSM 17436 / LMG 22146 / PsJN) (Burkholderia phytofirmans) protein is Phosphomethylpyrimidine synthase.